The primary structure comprises 206 residues: CASP-like protein 1F1 (206 aa).

Over 1-43 (MCFQFSILYTCYLAHFGVFPRKYLVMAGIEAKFQQNPPLGTHK) the chain is Cytoplasmic. A helical transmembrane segment spans residues 44 to 64 (LFLGAHICLRILTVTATLTAA). Residues 65 to 92 (WMMITSKQTVEVYGIQVEAKYSYSSAFK) are Extracellular-facing. The helical transmembrane segment at 93-113 (FFSYANAIACGCSVLTLFPAF) threads the bilayer. The Cytoplasmic segment spans residues 114–124 (SLFYRGSTPMK). The helical transmembrane segment at 125-145 (FFFLFLHDLCMMSLVLAGCAA) threads the bilayer. Topologically, residues 146–177 (ATAIGYVGRYGNNHAGWMAICDQFDEYCNRIR) are extracellular. The helical transmembrane segment at 178–198 (LSLMFSYLAFVFILMLTIMSA) threads the bilayer. Residues 199 to 206 (NKSREIRV) lie on the Cytoplasmic side of the membrane.

This sequence belongs to the Casparian strip membrane proteins (CASP) family. In terms of assembly, homodimer and heterodimers.

The protein resides in the cell membrane. The sequence is that of CASP-like protein 1F1 from Vitis vinifera (Grape).